Here is a 99-residue protein sequence, read N- to C-terminus: Integration host factor subunit alpha (99 aa).

This sequence belongs to the bacterial histone-like protein family. In terms of assembly, heterodimer of an alpha and a beta chain.

Functionally, this protein is one of the two subunits of integration host factor, a specific DNA-binding protein that functions in genetic recombination as well as in transcriptional and translational control. The sequence is that of Integration host factor subunit alpha from Stenotrophomonas maltophilia (strain R551-3).